We begin with the raw amino-acid sequence, 253 residues long: DNA repair protein RecO (253 aa).

It belongs to the RecO family.

Functionally, involved in DNA repair and RecF pathway recombination. The chain is DNA repair protein RecO from Staphylococcus epidermidis (strain ATCC 35984 / DSM 28319 / BCRC 17069 / CCUG 31568 / BM 3577 / RP62A).